The primary structure comprises 154 residues: Ribonuclease 8 (154 aa).

The signal sequence occupies residues 1-27 (MAPARAGCCALLLLLLGLWVAEIPVSA). Histidine 42 (proton acceptor) is an active-site residue. Disulfide bonds link cysteine 64-cysteine 118, cysteine 82-cysteine 133, and cysteine 89-cysteine 96. Substrate-binding positions include 65–69 (KDLNT) and lysine 90. The active-site Proton donor is the histidine 149.

It belongs to the pancreatic ribonuclease family.

The protein resides in the secreted. Its function is as follows. Has a low ribonuclease activity. The chain is Ribonuclease 8 (RNASE8) from Pongo pygmaeus (Bornean orangutan).